Reading from the N-terminus, the 472-residue chain is Adenosylhomocysteinase (472 aa).

Substrate is bound by residues threonine 62, aspartate 137, and glutamate 197. NAD(+) is bound at residue 198–200 (TTT). Substrate contacts are provided by lysine 227 and aspartate 231. Residues asparagine 232, 261-266 (GYGDVG), glutamate 284, asparagine 319, 340-342 (IGH), and asparagine 385 contribute to the NAD(+) site.

The protein belongs to the adenosylhomocysteinase family. Requires NAD(+) as cofactor.

The protein resides in the cytoplasm. It catalyses the reaction S-adenosyl-L-homocysteine + H2O = L-homocysteine + adenosine. It functions in the pathway amino-acid biosynthesis; L-homocysteine biosynthesis; L-homocysteine from S-adenosyl-L-homocysteine: step 1/1. Functionally, may play a key role in the regulation of the intracellular concentration of adenosylhomocysteine. This chain is Adenosylhomocysteinase, found in Bordetella pertussis (strain Tohama I / ATCC BAA-589 / NCTC 13251).